We begin with the raw amino-acid sequence, 286 residues long: Bifunctional protein FolD (286 aa).

NADP(+)-binding positions include 165–167, serine 190, and valine 231; that span reads GRS.

Belongs to the tetrahydrofolate dehydrogenase/cyclohydrolase family. As to quaternary structure, homodimer.

It catalyses the reaction (6R)-5,10-methylene-5,6,7,8-tetrahydrofolate + NADP(+) = (6R)-5,10-methenyltetrahydrofolate + NADPH. The enzyme catalyses (6R)-5,10-methenyltetrahydrofolate + H2O = (6R)-10-formyltetrahydrofolate + H(+). It participates in one-carbon metabolism; tetrahydrofolate interconversion. Its function is as follows. Catalyzes the oxidation of 5,10-methylenetetrahydrofolate to 5,10-methenyltetrahydrofolate and then the hydrolysis of 5,10-methenyltetrahydrofolate to 10-formyltetrahydrofolate. This chain is Bifunctional protein FolD, found in Bacillus cereus (strain ATCC 10987 / NRS 248).